Here is a 736-residue protein sequence, read N- to C-terminus: Cytosolic neutral trehalase (736 aa).

Positions 1–47 (MSEAPQARRVGSVDDHSVYDDAKTYYTSEERHNNSRSGPRQRTYSQN) are disordered. The segment covering 11 to 33 (GSVDDHSVYDDAKTYYTSEERHN) has biased composition (basic and acidic residues). Positions 35-47 (SRSGPRQRTYSQN) are enriched in polar residues. Residues aspartate 92, aspartate 94, asparagine 96, glutamine 98, and aspartate 103 each contribute to the Ca(2+) site. Residues arginine 279, 286–287 (WD), asparagine 323, 332–334 (RSQ), glutamate 399, arginine 448, and glycine 451 contribute to the substrate site. Active-site proton donor/acceptor residues include aspartate 453 and glutamate 657.

This sequence belongs to the glycosyl hydrolase 37 family. The cofactor is Ca(2+).

Its subcellular location is the cytoplasm. It carries out the reaction alpha,alpha-trehalose + H2O = alpha-D-glucose + beta-D-glucose. The protein operates within carbohydrate degradation. Hydrolyzes intracellular trehalose to glucose. Plays a role in pathogenicity, specifically in proliferation of invasive hyphae in rice blast disease. This is Cytosolic neutral trehalase (NTH1) from Pyricularia oryzae (strain 70-15 / ATCC MYA-4617 / FGSC 8958) (Rice blast fungus).